The primary structure comprises 346 residues: C5a anaphylatoxin chemotactic receptor 1 (346 aa).

At 1-33 (MDDNNSDWTSYDFGNDTIPSPNEISLSHIGTRH) the chain is on the extracellular side. N-linked (GlcNAc...) asparagine glycosylation is found at N4 and N15. The chain crosses the membrane as a helical span at residues 34-60 (WITLVCYGIVFLLGVPGNALVVWVTGF). Over 61–65 (RMPNS) the chain is Cytoplasmic. Residues 66–89 (VNAQWFLNLAIADLLCCLSLPILM) form a helical membrane-spanning segment. Residues 90 to 106 (VPLAQDQHWPFGALACK) are Extracellular-facing. A disulfide bond links C105 and C183. The chain crosses the membrane as a helical span at residues 107-128 (LFSGIFYMMMYCSVLLLVVISL). Over 129–149 (DRFLLVTKPVWCQNNRQPRQA) the chain is Cytoplasmic. The helical transmembrane segment at 150-170 (RILCFIIWILGLLGSSPYFAH) threads the bilayer. Residues 171–194 (MEIQHHSETKTVCTGSYSSLGHAW) are Extracellular-facing. Residues 195–220 (AITIIRSFLFFLLPFLIICISHWKVY) traverse the membrane as a helical segment. The Cytoplasmic segment spans residues 221-238 (HMTSSGRRQRDKSSRTLR). The helical transmembrane segment at 239 to 261 (VILALVLGFFLCWTPLHIVDLLI) threads the bilayer. At 262 to 279 (LVSDQPSERFEVNLNLAH) the chain is on the extracellular side. A helical membrane pass occupies residues 280-300 (VLTLCLAYINSCLNPLLYVCL). Residues 301-346 (GRGFKENLISSLRSVLHFASEAPTHGPSMTTNSKSTTDGVFREKPV) are Cytoplasmic-facing. The segment at 323–346 (PTHGPSMTTNSKSTTDGVFREKPV) is disordered. Over residues 327–338 (PSMTTNSKSTTD) the composition is skewed to polar residues.

This sequence belongs to the G-protein coupled receptor 1 family.

The protein localises to the cell membrane. Receptor for the chemotactic and inflammatory peptide anaphylatoxin C5a. This receptor stimulates chemotaxis, granule enzyme release and superoxide anion production. The polypeptide is C5a anaphylatoxin chemotactic receptor 1 (c5ar1) (Danio rerio (Zebrafish)).